The chain runs to 605 residues: Phosphoenolpyruvate carboxykinase [GTP] (605 aa).

Substrate contacts are provided by residues Arg79 and 218–220 (YGG). Lys227 and His247 together coordinate Mn(2+). Residue Ser269 participates in substrate binding. 270–275 (ACGKTN) is a binding site for GTP. Cys271 is a catalytic residue. Asp294 provides a ligand contact to Mn(2+). Over residues 364–381 (LTDWKGRDWTPQSDEKAA) the composition is skewed to basic and acidic residues. A disordered region spans residues 364–385 (LTDWKGRDWTPQSDEKAAHPNS). 384–386 (NSR) provides a ligand contact to substrate. Residues Arg386, Arg417, and 513–516 (FGEN) each bind GTP.

Belongs to the phosphoenolpyruvate carboxykinase [GTP] family. Monomer. The cofactor is Mn(2+).

Its subcellular location is the cytoplasm. It catalyses the reaction oxaloacetate + GTP = phosphoenolpyruvate + GDP + CO2. Its pathway is carbohydrate biosynthesis; gluconeogenesis. Catalyzes the conversion of oxaloacetate (OAA) to phosphoenolpyruvate (PEP), the rate-limiting step in the metabolic pathway that produces glucose from lactate and other precursors derived from the citric acid cycle. In Saccharopolyspora erythraea (strain ATCC 11635 / DSM 40517 / JCM 4748 / NBRC 13426 / NCIMB 8594 / NRRL 2338), this protein is Phosphoenolpyruvate carboxykinase [GTP].